The primary structure comprises 298 residues: Pheromone-regulated membrane protein 9 (298 aa).

The Cytoplasmic segment spans residues methionine 1–lysine 111. Residues alanine 112–asparagine 132 form a helical membrane-spanning segment. Residues threonine 133 to valine 137 lie on the Extracellular side of the membrane. Residues alanine 138 to phenylalanine 158 traverse the membrane as a helical segment. The Cytoplasmic portion of the chain corresponds to serine 159–phenylalanine 298. Positions serine 235–phenylalanine 262 are disordered. A COPII binding region spans residues phenylalanine 297 to phenylalanine 298.

Belongs to the DUP/COS family. In terms of assembly, interacts with PRM8. Binds to COPII coated vesicles.

The protein localises to the cell membrane. May be involved in endoplasmic reticulum exit trafficking of proteins. This chain is Pheromone-regulated membrane protein 9 (PRM9), found in Saccharomyces cerevisiae (strain ATCC 204508 / S288c) (Baker's yeast).